A 1082-amino-acid chain; its full sequence is RE1-silencing transcription factor (1082 aa).

The tract at residues 32-117 is interaction with SIN3A; the sequence is DLHELSKAEL…SLELSAVEPQ (86 aa). Residues 43-57 are interaction with SIN3B; it reads APQLIMLANVALTGE. Residues 140 to 413 form an interaction with ZFP90 region; the sequence is PVAEDKCRSS…KSKHPTCPSK (274 aa). The C2H2-type 1 zinc finger occupies 154-176; that stretch reads FRCKPCQYEAESEEQFVHHIRIH. Positions 196–207 are required for binding to the neuron-restrictive silencer element; sequence SGSSPAEEGEFS. 7 C2H2-type zinc fingers span residues 211–235, 243–265, 271–293, 299–321, 327–350, 356–378, and 384–407; these read IRCD…HHLR, YKCI…LRNH, YTCS…VRTH, YKCE…MRTH, FKCD…RQVH, LNCP…VELH, and FNCP…KSKH. Disordered stretches follow at residues 408–809 and 831–1027; these read PTCP…ELSL and SKLL…KAGL. Positions 440 to 475 are enriched in basic and acidic residues; that stretch reads EKMENEQTKTKGDVSGKKNEKPVKAVGKDASKEKKP. Over residues 477-497 the composition is skewed to low complexity; the sequence is SSVSVVQVTTRTRKSAVAAET. Over residues 581-597 the composition is skewed to basic residues; the sequence is KGTKKTPPKTKTSKKGG. A compositionally biased stretch (polar residues) spans 630-640; it reads VTGSGSSQTEL. 2 stretches are compositionally biased toward pro residues: residues 684 to 713 and 729 to 751; these read YPQP…PAPP and KEPP…PPPM. Composition is skewed to basic and acidic residues over residues 798-807 and 854-864; these read LRKDRAEKEL and NSREETPKDQE. The span at 900–909 shows a compositional bias: polar residues; it reads RVSSSEQNSA. The residue at position 950 (Ser-950) is a Phosphoserine. The interaction with RCOR1 stretch occupies residues 985 to 1063; the sequence is EGIHSHDGSD…HLNRHLVNVY (79 aa). A C2H2-type 9 zinc finger spans residues 1036–1058; the sequence is FVCIFCDRSFRKEKDYSKHLNRH.

In terms of assembly, isoform 1 and isoform 2 form heterodimers. Isoform 2: Forms homodimers and homooligomers; binds to the neuron-restrictive silencer element (NRSE) as monomer. Interacts with SIN3A, SIN3B and RCOR1. Interacts with CDYL. Interacts with EHMT1 and EHMT2 only in the presence of CDYL. Part of a complex containing at least CDYL, REST, WIZ, SETB1, EHMT1 and EHMT2. Interacts (via zinc-finger DNA-binding domain) with ZFP90 (via N- and C-termini); the interaction inhibits REST repressor activity. Interacts (via C2H2-type zinc finger 5) with PRICKLE1. Interacts with FBXW11 and BTRC. Interacts with USP7. Post-translationally, O-glycosylated. Phosphorylated; phosphorylation is required for ubiquitination. In terms of processing, ubiquitinated; ubiquitination is mediated by BTRC and leads to proteasomal degradation in G2 phase. Ubiquitination increases during neuronal differentiation. Deubiquitinated by USP7; leading to its stabilization and promoting the maintenance of neural progenitor cells. In terms of tissue distribution, expressed in the hippocampus, including quiescent neuronal progenitor (QNP) cells, transient-amplifying progenitor (TAP) cells, neuroblasts and mature neurons (at protein level). Expressed in embryonic stem cells (at protein level). Expressed in many non-neuronal tissues including the heart and liver. Abundantly expressed in osteoblastic lineage cells. Expressed in the spleen, kidney, blood cells, cortex, neocortex and in the utricle, saccule and organ of Corti of the inner ear. Isoform 2: Expressed in the cortex, neocortex and in the utricle, saccule and organ of Corti of the inner ear.

The protein localises to the nucleus. The protein resides in the cytoplasm. Transcriptional repressor which binds neuron-restrictive silencer element (NRSE) and represses neuronal gene transcription in non-neuronal cells. Restricts the expression of neuronal genes by associating with two distinct corepressors, SIN3A and RCOR1, which in turn recruit histone deacetylase to the promoters of REST-regulated genes. Mediates repression by recruiting the BHC complex at RE1/NRSE sites which acts by deacetylating and demethylating specific sites on histones, thereby acting as a chromatin modifier. Transcriptional repression by REST-CDYL via the recruitment of histone methyltransferase EHMT2 may be important in transformation suppression. Represses the expression of SRRM4 in non-neural cells to prevent the activation of neural-specific splicing events and to prevent production of REST isoform 2. Repressor activity may be inhibited by forming heterodimers with isoform 2, thereby preventing binding to NRSE or binding to corepressors and leading to derepression of target genes. Also maintains repression of neuronal genes in neural stem cells, and allows transcription and differentiation into neurons by dissociation from RE1/NRSE sites of target genes. Thereby is involved in maintaining the quiescent state of adult neural stem cells and preventing premature differentiation into mature neurons. Plays a role in the developmental switch in synaptic NMDA receptor composition during postnatal development, by repressing GRIN2B expression and thereby altering NMDA receptor properties from containing primarily GRIN2B to primarily GRIN2A subunits. Acts as a regulator of osteoblast differentiation. Key repressor of gene expression in hypoxia; represses genes in hypoxia by direct binding to an RE1/NRSE site on their promoter regions. May also function in stress resistance in the brain during aging; possibly by regulating expression of genes involved in cell death and in the stress response. Repressor of gene expression in the hippocampus after ischemia by directly binding to RE1/NRSE sites and recruiting SIN3A and RCOR1 to promoters of target genes, thereby promoting changes in chromatin modifications and ischemia-induced cell death. After ischemia, might play a role in repression of miR-132 expression in hippocampal neurons, thereby leading to neuronal cell death. Functionally, binds to the 3' region of the neuron-restrictive silencer element (NRSE), with lower affinity than isoform 1. Exhibits weaker repressor activity compared to isoform 1. May negatively regulate the repressor activity of isoform 1 by binding to isoform 1, thereby preventing its binding to NRSE and leading to derepression of target genes. However, in another study, does not appear to be implicated in repressor activity of a NRSE motif-containing reporter construct nor in inhibitory activity on the isoform 1 transcriptional repressor activity. Post-transcriptional inactivation of REST by SRRM4-dependent alternative splicing into isoform 2 is required in mechanosensory hair cells in the inner ear for derepression of neuronal genes, maintenance of hair cells and hearing. This is RE1-silencing transcription factor (Rest) from Mus musculus (Mouse).